Reading from the N-terminus, the 308-residue chain is Staphylococcal superantigen-like 4 (308 aa).

The signal sequence occupies residues 1-30 (MKITTIAKTSLALGLLTTGVITTTTQAANA). The segment at 32–117 (TLSSTKVEAP…TTKQVPTEIN (86 aa)) is disordered. Polar residues-rich tracts occupy residues 33 to 47 (LSST…TPPS) and 55 to 76 (SKPN…TANA). The segment covering 77–93 (TTPPSTKVTTPPSTNTP) has biased composition (low complexity). Polar residues predominate over residues 94–114 (QPMQSTKSDTPQSPTTKQVPT). The interval 180 to 278 (VDVFVVLEEN…VIKMKNGGKY (99 aa)) is sialyl Lewis X-binding.

It belongs to the staphylococcal/streptococcal toxin family.

It is found in the secreted. Functionally, secreted protein that plays a role in immune innate response inhibition by interfering with host TLR2-mediated pathway. In Staphylococcus aureus (strain NCTC 8325 / PS 47), this protein is Staphylococcal superantigen-like 4.